The following is a 274-amino-acid chain: Long chain fatty acid elongase 5 (274 aa).

The Extracellular segment spans residues 1–23; that stretch reads MMDQILGTNFTYEGAKEVARGLE. A helical transmembrane segment spans residues 24 to 44; sequence GFSAKLAVGYIATIFGLKYYM. Residues 45–61 are Cytoplasmic-facing; it reads KDRKAFDLSTPLNIWNG. Residues 62–82 form a helical membrane-spanning segment; sequence ILSTFSLLGFLFTFPTLLSVI. Residues 83–105 lie on the Extracellular side of the membrane; sequence RKDGFSHTYSHVSELYTDSTSGY. The chain crosses the membrane as a helical span at residues 106–126; that stretch reads WIFLWVISKIPELLDTVFIVL. The Cytoplasmic portion of the chain corresponds to 127–129; sequence RKR. The helical transmembrane segment at 130–150 threads the bilayer; sequence PLIFMHWYHHALTGYYALVCY. The Extracellular segment spans residues 151–156; that stretch reads HEDAVH. The helical transmembrane segment at 157 to 177 threads the bilayer; that stretch reads MVWVVWMNYIIHAFMYGYYLL. The Cytoplasmic portion of the chain corresponds to 178 to 187; the sequence is KSLKVPIPPS. A helical membrane pass occupies residues 188–208; sequence VAQAITTSQMVQFAVAIFAQV. Over 209–227 the chain is Extracellular; it reads HVSYKHYVEGVEGLAYSFR. The helical transmembrane segment at 228–248 threads the bilayer; sequence GTAIGFFMLTTYFYLWIQFYK. At 249–274 the chain is on the cytoplasmic side; that stretch reads EHYLKNGGKKYNLAKDQAKTQTKKAN.

Belongs to the ELO family. As to expression, expressed in the gut and unidentified head cells.

The protein resides in the membrane. It catalyses the reaction 11-methyldodecanoyl-CoA + malonyl-CoA + H(+) = 3-oxoisopentadecanoyl-CoA + CO2 + CoA. The catalysed reaction is isopentadecanoyl-CoA + malonyl-CoA + H(+) = 3-oxoisoheptadecanoyl-CoA + CO2 + CoA. The protein operates within lipid metabolism; fatty acid biosynthesis. Catalyzes the first and rate-limiting reaction of the four reactions that constitute the long-chain fatty acids elongation cycle. Uses malonyl-CoA to add 2 carbons per cycle to the chain of long-chain fatty acids. Condensing enzyme required for the formation of isopentadecanoate (C15iso) and isoheptadecanoate (C17iso), both play critical roles in animal development and growth. The polypeptide is Long chain fatty acid elongase 5 (Caenorhabditis elegans).